The following is a 1399-amino-acid chain: DNA-directed RNA polymerase subunit beta' (1399 aa).

C71, C73, C86, and C89 together coordinate Zn(2+). Residues D462, D464, and D466 each contribute to the Mg(2+) site. Zn(2+) contacts are provided by C810, C884, C891, and C894.

Belongs to the RNA polymerase beta' chain family. The RNAP catalytic core consists of 2 alpha, 1 beta, 1 beta' and 1 omega subunit. When a sigma factor is associated with the core the holoenzyme is formed, which can initiate transcription. Mg(2+) serves as cofactor. Requires Zn(2+) as cofactor.

The catalysed reaction is RNA(n) + a ribonucleoside 5'-triphosphate = RNA(n+1) + diphosphate. Functionally, DNA-dependent RNA polymerase catalyzes the transcription of DNA into RNA using the four ribonucleoside triphosphates as substrates. The chain is DNA-directed RNA polymerase subunit beta' from Chelativorans sp. (strain BNC1).